The chain runs to 284 residues: Protease HtpX homolog (284 aa).

The next 2 helical transmembrane spans lie at 7-26 (TYLLMALLVGLIYAICMMLH) and 33-47 (IILALIPNVIAYYMS). Position 129 (His129) interacts with Zn(2+). Residue Glu130 is part of the active site. His133 contacts Zn(2+). 2 consecutive transmembrane segments (helical) span residues 148–168 (LAGAIVMIAEWMLYWGGIFFV) and 180–200 (IGTILLLILAPIAATIIQFAI). Glu205 is a Zn(2+) binding site.

It belongs to the peptidase M48B family. Zn(2+) serves as cofactor.

Its subcellular location is the cell membrane. The sequence is that of Protease HtpX homolog from Methanocaldococcus jannaschii (strain ATCC 43067 / DSM 2661 / JAL-1 / JCM 10045 / NBRC 100440) (Methanococcus jannaschii).